Here is a 118-residue protein sequence, read N- to C-terminus: Holo-[acyl-carrier-protein] synthase (118 aa).

Aspartate 8 and glutamate 58 together coordinate Mg(2+).

It belongs to the P-Pant transferase superfamily. AcpS family. Mg(2+) serves as cofactor.

It is found in the cytoplasm. The enzyme catalyses apo-[ACP] + CoA = holo-[ACP] + adenosine 3',5'-bisphosphate + H(+). Functionally, transfers the 4'-phosphopantetheine moiety from coenzyme A to a Ser of acyl-carrier-protein. The protein is Holo-[acyl-carrier-protein] synthase of Listeria welshimeri serovar 6b (strain ATCC 35897 / DSM 20650 / CCUG 15529 / CIP 8149 / NCTC 11857 / SLCC 5334 / V8).